Here is a 292-residue protein sequence, read N- to C-terminus: 1D-myo-inositol 2-acetamido-2-deoxy-alpha-D-glucopyranoside deacetylase (292 aa).

Zn(2+)-binding residues include H12, D15, and H147.

The protein belongs to the MshB deacetylase family. Zn(2+) is required as a cofactor.

The catalysed reaction is 1D-myo-inositol 2-acetamido-2-deoxy-alpha-D-glucopyranoside + H2O = 1D-myo-inositol 2-amino-2-deoxy-alpha-D-glucopyranoside + acetate. Functionally, catalyzes the deacetylation of 1D-myo-inositol 2-acetamido-2-deoxy-alpha-D-glucopyranoside (GlcNAc-Ins) in the mycothiol biosynthesis pathway. This chain is 1D-myo-inositol 2-acetamido-2-deoxy-alpha-D-glucopyranoside deacetylase, found in Rhodococcus jostii (strain RHA1).